A 517-amino-acid chain; its full sequence is Crotonobetaine/carnitine--CoA ligase (517 aa).

It belongs to the ATP-dependent AMP-binding enzyme family.

The enzyme catalyses 4-(trimethylamino)butanoate + ATP + CoA = 4-(trimethylamino)butanoyl-CoA + AMP + diphosphate. It catalyses the reaction crotonobetaine + ATP + CoA = crotonobetainyl-CoA + AMP + diphosphate. The catalysed reaction is (R)-carnitine + ATP + CoA = (R)-carnitinyl-CoA + AMP + diphosphate. The protein operates within amine and polyamine metabolism; carnitine metabolism. Its function is as follows. Catalyzes the transfer of CoA to carnitine, generating the initial carnitinyl-CoA needed for the CaiB reaction cycle. Also has activity toward crotonobetaine and gamma-butyrobetaine. This is Crotonobetaine/carnitine--CoA ligase from Escherichia coli O139:H28 (strain E24377A / ETEC).